The sequence spans 840 residues: DNA helicase MCM8 (840 aa).

The tract at residues 16–54 (QSWKRGRGGGNFSGKWREREHRPDLSKTTGKRTSEQTPQ) is disordered. Over residues 30–40 (KWREREHRPDL) the composition is skewed to basic and acidic residues. An MCM domain is found at 402 to 609 (LFKLIVNSLC…HHDHLLSEHV (208 aa)). 454-461 (GDPGLGKS) contributes to the ATP binding site. Ser630 is subject to Phosphoserine.

It belongs to the MCM family. As to quaternary structure, component of the MCM8-MCM9 complex, which forms a hexamer composed of MCM8 and MCM9. Interacts with the DNA mismatch repair (MMR) complex composed at least of MSH2, MSH3, MSH6, PMS1 and MLH1. Interacts with RAD51; the interaction recruits RAD51 to DNA damage sites. Interacts with the MRN complex composed of MRE11, RAD50 and NBN/NBS1. Interacts with CDC6 and ORC2. Interacts with HROB; the interaction recruits the MCM8-MCM9 complex to DNA damage sites. As to expression, highest levels in placenta, lung and pancreas. Low levels in skeletal muscle and kidney. Expressed in various tumors with highest levels in colon and lung cancers.

Its subcellular location is the nucleus. The protein localises to the chromosome. The catalysed reaction is ATP + H2O = ADP + phosphate + H(+). Its function is as follows. Component of the MCM8-MCM9 complex, a complex involved in the repair of double-stranded DNA breaks (DBSs) and DNA interstrand cross-links (ICLs) by homologous recombination (HR). Required for DNA resection by the MRE11-RAD50-NBN/NBS1 (MRN) complex by recruiting the MRN complex to the repair site and by promoting the complex nuclease activity. Probably by regulating the localization of the MNR complex, indirectly regulates the recruitment of downstream effector RAD51 to DNA damage sites including DBSs and ICLs. The MCM8-MCM9 complex is dispensable for DNA replication and S phase progression. However, may play a non-essential for DNA replication: may be involved in the activation of the prereplicative complex (pre-RC) during G(1) phase by recruiting CDC6 to the origin recognition complex (ORC). Probably by regulating HR, plays a key role during gametogenesis. Stabilizes MCM9 protein. This chain is DNA helicase MCM8 (MCM8), found in Homo sapiens (Human).